Consider the following 161-residue polypeptide: Prs ADP-ribosylating toxin (161 aa).

This sequence belongs to the MbcT/ParT/Res family. Homodimer, forms heterotetrameric ParS(2)-ParT(2) complexes. Post-translationally, consumes NAD(+) and auto-ADP-ribosylates on the tryptic fragment Ala-47-Arg-66 in vitro. Also auto-ADP-ribosylates using NADP(+).

Toxic component of a type II toxin-antitoxin (TA) system. Expression in E.coli inhibits cell growth; bacteriostasis is neutralized by expression of cognate antitoxin ParS. ADP-ribosylates E.coli ribose-phosphate pyrophosphokinase (RPPK, prs) using NAD(+) in vitro; ADP-ribosylates RPPK on 'Lys-182' and 'Ser-202'. Cannot use NADP(+). Also auto-ADP-ribosylates in vitro; in the presence of RPPK auto-ADP-ribosylation decreases. This is Prs ADP-ribosylating toxin from Sphingobium sp. (strain YBL2).